The primary structure comprises 638 residues: Probable potassium transport system protein Kup (638 aa).

12 helical membrane passes run 25 to 45, 65 to 85, 114 to 134, 152 to 172, 184 to 204, 226 to 246, 262 to 282, 291 to 311, 352 to 372, 382 to 402, 410 to 430, and 434 to 454; these read LAIAAIGVVFGDIGTSPLYSL, VISLLFWAILLVVGVKYLLFV, AGALMALGIFGACMFYGDAVI, PHLSHLVLPITIVILIALFWI, FGPIMVLWFVVIAALGVYHIV, LLQAYVVLGSVVLVLTGAEAL, AYGLVMPSLVLNYFGQGALLI, PFFLLAPEWGLLPLVVLSTVA, IYVPVVNWLLLAVILCIVVGF, YGIAVTATMVITTVLACVVMV, LLVGAIIAVFLAIDLGFFGAN, and VAQGGWLPLGIGALLFFLLMT.

Belongs to the HAK/KUP transporter (TC 2.A.72) family.

It is found in the cell inner membrane. The enzyme catalyses K(+)(in) + H(+)(in) = K(+)(out) + H(+)(out). Transport of potassium into the cell. Likely operates as a K(+):H(+) symporter. In Burkholderia cenocepacia (strain HI2424), this protein is Probable potassium transport system protein Kup.